The sequence spans 235 residues: MNENVMVKGLTALTILTSLGFAENISNQPHSIAKAEKNVKEITDATKEPYNSVVAFVGGTGVVVGKNTIVTNKHIAKSNDIFKNRVSAHHSSKGKGGGNYDVKDIVEYPGKEDLAIVHVHETSTEGLNFNKNVSYTKFADGAKVKDRISVIGYPKGAQTKYKMFESTGTINHISGTFMEFDAYAQPGNSGSPVLNSKHELIGILYAGSGKDESEKNFGVYFTPQLKEFIQNNIEK.

The N-terminal stretch at Met1–Ala35 is a signal peptide. Catalysis depends on charge relay system residues His74, Asp113, and Ser189.

The protein belongs to the peptidase S1B family.

It is found in the secreted. The protein is Serine protease SplA (splA) of Staphylococcus aureus (strain MSSA476).